A 198-amino-acid polypeptide reads, in one-letter code: Na(+)-translocating NADH-quinone reductase subunit E (198 aa).

The next 6 membrane-spanning stretches (helical) occupy residues 11-31, 35-55, 77-97, 110-130, 140-160, and 176-196; these read SVFI…FLAV, VSTA…AVPV, FLNF…LEMI, GIFL…SFMV, VVYG…LAGL, and LGIT…FSGI.

This sequence belongs to the NqrDE/RnfAE family. As to quaternary structure, composed of six subunits; NqrA, NqrB, NqrC, NqrD, NqrE and NqrF.

The protein localises to the cell inner membrane. The catalysed reaction is a ubiquinone + n Na(+)(in) + NADH + H(+) = a ubiquinol + n Na(+)(out) + NAD(+). In terms of biological role, NQR complex catalyzes the reduction of ubiquinone-1 to ubiquinol by two successive reactions, coupled with the transport of Na(+) ions from the cytoplasm to the periplasm. NqrA to NqrE are probably involved in the second step, the conversion of ubisemiquinone to ubiquinol. This Haemophilus ducreyi (strain 35000HP / ATCC 700724) protein is Na(+)-translocating NADH-quinone reductase subunit E.